The chain runs to 238 residues: 2-C-methyl-D-erythritol 4-phosphate cytidylyltransferase (238 aa).

Belongs to the IspD/TarI cytidylyltransferase family. IspD subfamily.

It catalyses the reaction 2-C-methyl-D-erythritol 4-phosphate + CTP + H(+) = 4-CDP-2-C-methyl-D-erythritol + diphosphate. The protein operates within isoprenoid biosynthesis; isopentenyl diphosphate biosynthesis via DXP pathway; isopentenyl diphosphate from 1-deoxy-D-xylulose 5-phosphate: step 2/6. Catalyzes the formation of 4-diphosphocytidyl-2-C-methyl-D-erythritol from CTP and 2-C-methyl-D-erythritol 4-phosphate (MEP). This chain is 2-C-methyl-D-erythritol 4-phosphate cytidylyltransferase, found in Aliivibrio fischeri (strain MJ11) (Vibrio fischeri).